A 3999-amino-acid polypeptide reads, in one-letter code: Hybrid PKS-NRPS synthetase xenE (3999 aa).

Residues 13-449 (REPIAVVGSG…GTNAHCIIEN (437 aa)) form the Ketosynthase family 3 (KS3) domain. Residues Cys186, His325, and His369 each act as for beta-ketoacyl synthase activity in the active site. Residues 562-879 (VFTGQGAQWP…TGLLNRGKDD (318 aa)) enclose the Malonyl-CoA:ACP transacylase (MAT) domain. Positions 949–1084 (NPLLGSRTTD…GRVIVITGET (136 aa)) are N-terminal hotdog fold. In terms of domain architecture, PKS/mFAS DH spans 949 to 1253 (NPLLGSRTTD…VVAFAEQTED (305 aa)). Residues 950–1252 (PLLGSRTTDV…RVVAFAEQTE (303 aa)) form a dehydratase (DH) domain region. His981 acts as the Proton acceptor; for dehydratase activity in catalysis. Positions 1099-1253 (LVDIPEDRFY…VVAFAEQTED (155 aa)) are C-terminal hotdog fold. Catalysis depends on Asp1159, which acts as the Proton donor; for dehydratase activity. The segment at 1298–1593 (YMKQLVTLFP…FSGADSPMPE (296 aa)) is methyltransferase (cMeT) domain. Positions 2133-2306 (TYVLFGLTSD…AASILHLGAV (174 aa)) constitute a Ketoreductase (KR) domain. Positions 2414–2495 (EEILEIVQDA…QLVEYAIGSM (82 aa)) constitute a Carrier 1 domain. At Ser2455 the chain carries O-(pantetheine 4'-phosphoryl)serine. The interval 2501–2573 (PNRADSAKAS…EESPSESVND (73 aa)) is disordered. Residues 2526 to 2554 (SVSSSPSSLPKTSASGSSQQMSEGSSKTS) show a composition bias toward low complexity. The interval 2580–3015 (EKVLPVSPGQ…EEVSLFTEQE (436 aa)) is condensation. Residues 3045 to 3453 (AVHTDKVALK…RIEGDTQIKL (409 aa)) form an adenylation region. A Carrier 2 domain is found at 3562 to 3642 (RKLTDTESKL…AMAAAIQDTS (81 aa)). The residue at position 3602 (Ser3602) is an O-(pantetheine 4'-phosphoryl)serine. The reductase-like (R) domain (R) stretch occupies residues 3681–3900 (LTGATGFLGK…IDLITVEKAA (220 aa)).

This sequence in the C-terminal section; belongs to the NRP synthetase family.

It functions in the pathway mycotoxin biosynthesis. Hybrid PKS-NRPS synthetase; part of the gene cluster that mediates the biosynthesis of xenoacremones such as xenoacremone A, a compound that shows inhibitory activity toward the PI3K/AKT signaling pathway and which has the ability to induce apoptosis of A549 lung cancer cells. Within the pathway, cooperation of the hybrid PKS-NRPS xenE and the trans-acting enoyl reductase xenG is responsible for the formation of the reduced tyrosine-nonaketide derivative. The PKS module of xenE acted in combination with the trans-acting enoyl reductase xenG to produce a double-methylated nonaketide attached to the ACP domain. In parallel, the adenylation (A) domain of the NRPS module activated L-tyrosine, which was then transferred to the ACP domain. The condensation (C) domain subsequently linked this group to the polyketide chain, forming an enzyme-bound amide. Reductive release by the C-terminal R domain afforded the aldehyde derivative. The alpha/beta hydrolase xenA then accelerates intramolecular nucleophilic attack to give a pyrrolidone derivative. Subsequently, three enzymes, xenF, xenD, and xenC, coordinately participate in the conversion to xenoacremone B. XenF catalyzes sigmatropic rearrangement to form an A-ring, which leads to an unusual intermediate with a hexane ring, which is required for the formation of the tricarbocyclic product. Epoxidation catalyzed by xenD and the formation of the paracyclophane ether catalyzed by xenC initiate a spontaneous intramolecular Diels-Alder (IMDA) reaction to yield xenoacremone B. Spontaneous hydration of xenoacremone B leads to the formation of xenoacremone A, which undergoes subsequent methylation to afford xenoacremone C. The sequence is that of Hybrid PKS-NRPS synthetase xenE from Xenoacremonium sinensis (Endophyte fungus).